A 351-amino-acid polypeptide reads, in one-letter code: N-acetyl-gamma-glutamyl-phosphate reductase (351 aa).

Cys154 is an active-site residue.

Belongs to the NAGSA dehydrogenase family. Type 1 subfamily.

It localises to the cytoplasm. It catalyses the reaction N-acetyl-L-glutamate 5-semialdehyde + phosphate + NADP(+) = N-acetyl-L-glutamyl 5-phosphate + NADPH + H(+). Its pathway is amino-acid biosynthesis; L-arginine biosynthesis; N(2)-acetyl-L-ornithine from L-glutamate: step 3/4. Catalyzes the NADPH-dependent reduction of N-acetyl-5-glutamyl phosphate to yield N-acetyl-L-glutamate 5-semialdehyde. This Prochlorococcus marinus (strain MIT 9301) protein is N-acetyl-gamma-glutamyl-phosphate reductase.